A 149-amino-acid polypeptide reads, in one-letter code: Evolved beta-galactosidase subunit beta (149 aa).

As to quaternary structure, heterooctamer of 4 alpha and 4 beta subunits.

Required for full activity of the EbgA enzyme. Exact function not known. This Escherichia coli O6:H1 (strain CFT073 / ATCC 700928 / UPEC) protein is Evolved beta-galactosidase subunit beta (ebgC).